Reading from the N-terminus, the 464-residue chain is ATP synthase subunit beta (464 aa).

ATP is bound at residue 152–159; sequence GGAGVGKT.

The protein belongs to the ATPase alpha/beta chains family. F-type ATPases have 2 components, CF(1) - the catalytic core - and CF(0) - the membrane proton channel. CF(1) has five subunits: alpha(3), beta(3), gamma(1), delta(1), epsilon(1). CF(0) has three main subunits: a(1), b(2) and c(9-12). The alpha and beta chains form an alternating ring which encloses part of the gamma chain. CF(1) is attached to CF(0) by a central stalk formed by the gamma and epsilon chains, while a peripheral stalk is formed by the delta and b chains.

The protein resides in the cell membrane. The catalysed reaction is ATP + H2O + 4 H(+)(in) = ADP + phosphate + 5 H(+)(out). Its function is as follows. Produces ATP from ADP in the presence of a proton gradient across the membrane. The catalytic sites are hosted primarily by the beta subunits. In Ureaplasma parvum serovar 3 (strain ATCC 27815 / 27 / NCTC 11736), this protein is ATP synthase subunit beta.